The primary structure comprises 175 residues: ATP-dependent protease subunit HslV (175 aa).

T2 is an active-site residue. Na(+)-binding residues include A156, C159, and T162.

This sequence belongs to the peptidase T1B family. HslV subfamily. As to quaternary structure, a double ring-shaped homohexamer of HslV is capped on each side by a ring-shaped HslU homohexamer. The assembly of the HslU/HslV complex is dependent on binding of ATP.

The protein localises to the cytoplasm. The enzyme catalyses ATP-dependent cleavage of peptide bonds with broad specificity.. With respect to regulation, allosterically activated by HslU binding. Protease subunit of a proteasome-like degradation complex believed to be a general protein degrading machinery. This is ATP-dependent protease subunit HslV from Rhizobium etli (strain ATCC 51251 / DSM 11541 / JCM 21823 / NBRC 15573 / CFN 42).